Here is a 55-residue protein sequence, read N- to C-terminus: Large ribosomal subunit protein bL32c (55 aa).

Belongs to the bacterial ribosomal protein bL32 family.

The protein resides in the plastid. It localises to the chloroplast. The polypeptide is Large ribosomal subunit protein bL32c (Atropa belladonna (Belladonna)).